The sequence spans 222 residues: MASLLARRSFSALRARHLAFSGQGLQGSHLCGLQSRAISYGSNKDDEEAEQLAKEISKDWSTVFERSMNTLFLTEMVRGLSLTLKYFFDPKVTINYPFEKGPLSPRFRGEHALRRYPTGEERCIACKLCEAVCPAQAITIEAEEREDGSRRTTRYDIDMTKCIYCGFCQEACPVDAIVEGPNFEFATETHEELLYDKEKLLENGDRWETEIAENLRSESLYR.

4Fe-4S ferredoxin-type domains are found at residues 114-143 (RRYP…IEAE) and 153-182 (TRYD…EGPN). Residues Cys-123, Cys-126, Cys-129, Cys-133, Cys-162, Cys-165, Cys-168, and Cys-172 each coordinate [4Fe-4S] cluster.

The protein belongs to the complex I 23 kDa subunit family. As to quaternary structure, complex I is composed of at least 49 different subunits. This is a component of the iron-sulfur (IP) fragment of the enzyme. [4Fe-4S] cluster is required as a cofactor.

The protein resides in the mitochondrion. The catalysed reaction is a ubiquinone + NADH + 5 H(+)(in) = a ubiquinol + NAD(+) + 4 H(+)(out). Core subunit of the mitochondrial membrane respiratory chain NADH dehydrogenase (Complex I) that is believed to belong to the minimal assembly required for catalysis. Complex I functions in the transfer of electrons from NADH to the respiratory chain. The immediate electron acceptor for the enzyme is believed to be ubiquinone. May donate electrons to ubiquinone. This chain is NADH dehydrogenase [ubiquinone] iron-sulfur protein 8-B, mitochondrial, found in Arabidopsis thaliana (Mouse-ear cress).